Consider the following 428-residue polypeptide: Enolase (428 aa).

Q163 contacts (2R)-2-phosphoglycerate. E205 acts as the Proton donor in catalysis. Residues D242, E285, and D312 each coordinate Mg(2+). (2R)-2-phosphoglycerate-binding residues include K337, R366, S367, and K388. The active-site Proton acceptor is K337.

It belongs to the enolase family. Requires Mg(2+) as cofactor.

The protein localises to the cytoplasm. It localises to the secreted. Its subcellular location is the cell surface. It catalyses the reaction (2R)-2-phosphoglycerate = phosphoenolpyruvate + H2O. It functions in the pathway carbohydrate degradation; glycolysis; pyruvate from D-glyceraldehyde 3-phosphate: step 4/5. Its function is as follows. Catalyzes the reversible conversion of 2-phosphoglycerate (2-PG) into phosphoenolpyruvate (PEP). It is essential for the degradation of carbohydrates via glycolysis. The sequence is that of Enolase from Nitrosomonas europaea (strain ATCC 19718 / CIP 103999 / KCTC 2705 / NBRC 14298).